Reading from the N-terminus, the 427-residue chain is Tyrosine--tRNA ligase (427 aa).

Residue Tyr33 coordinates L-tyrosine. Residues 38 to 47 carry the 'HIGH' region motif; it reads PTASSLTIGN. L-tyrosine is bound by residues Tyr168 and Gln172. Residues 228-232 carry the 'KMSKS' region motif; sequence KFGKS. Lys231 is a binding site for ATP. The region spanning 361 to 427 is the S4 RNA-binding domain; it reads LDLLSTLTNS…KKNYYLLRFN (67 aa).

It belongs to the class-I aminoacyl-tRNA synthetase family. TyrS type 1 subfamily. As to quaternary structure, homodimer.

It localises to the cytoplasm. It carries out the reaction tRNA(Tyr) + L-tyrosine + ATP = L-tyrosyl-tRNA(Tyr) + AMP + diphosphate + H(+). Its function is as follows. Catalyzes the attachment of tyrosine to tRNA(Tyr) in a two-step reaction: tyrosine is first activated by ATP to form Tyr-AMP and then transferred to the acceptor end of tRNA(Tyr). The polypeptide is Tyrosine--tRNA ligase (Cytophaga hutchinsonii (strain ATCC 33406 / DSM 1761 / CIP 103989 / NBRC 15051 / NCIMB 9469 / D465)).